Here is a 332-residue protein sequence, read N- to C-terminus: Holliday junction branch migration complex subunit RuvB (332 aa).

The tract at residues 1 to 181 (MSRILDNEMM…FGITGHMEYY (181 aa)) is large ATPase domain (RuvB-L). Residues Leu-20, Arg-21, Gly-62, Lys-65, Thr-66, Thr-67, 128–130 (EDF), Arg-171, Tyr-181, and Arg-218 each bind ATP. Mg(2+) is bound at residue Thr-66. A small ATPAse domain (RuvB-S) region spans residues 182-252 (AHADLTEIVE…ITDKALTMLD (71 aa)). The segment at 255–332 (HEGLDYVDQK…EHLGYEYSEK (78 aa)) is head domain (RuvB-H). DNA-binding residues include Arg-291, Arg-310, Arg-312, and Arg-315.

This sequence belongs to the RuvB family. Homohexamer. Forms an RuvA(8)-RuvB(12)-Holliday junction (HJ) complex. HJ DNA is sandwiched between 2 RuvA tetramers; dsDNA enters through RuvA and exits via RuvB. An RuvB hexamer assembles on each DNA strand where it exits the tetramer. Each RuvB hexamer is contacted by two RuvA subunits (via domain III) on 2 adjacent RuvB subunits; this complex drives branch migration. In the full resolvosome a probable DNA-RuvA(4)-RuvB(12)-RuvC(2) complex forms which resolves the HJ.

It localises to the cytoplasm. It carries out the reaction ATP + H2O = ADP + phosphate + H(+). Functionally, the RuvA-RuvB-RuvC complex processes Holliday junction (HJ) DNA during genetic recombination and DNA repair, while the RuvA-RuvB complex plays an important role in the rescue of blocked DNA replication forks via replication fork reversal (RFR). RuvA specifically binds to HJ cruciform DNA, conferring on it an open structure. The RuvB hexamer acts as an ATP-dependent pump, pulling dsDNA into and through the RuvAB complex. RuvB forms 2 homohexamers on either side of HJ DNA bound by 1 or 2 RuvA tetramers; 4 subunits per hexamer contact DNA at a time. Coordinated motions by a converter formed by DNA-disengaged RuvB subunits stimulates ATP hydrolysis and nucleotide exchange. Immobilization of the converter enables RuvB to convert the ATP-contained energy into a lever motion, pulling 2 nucleotides of DNA out of the RuvA tetramer per ATP hydrolyzed, thus driving DNA branch migration. The RuvB motors rotate together with the DNA substrate, which together with the progressing nucleotide cycle form the mechanistic basis for DNA recombination by continuous HJ branch migration. Branch migration allows RuvC to scan DNA until it finds its consensus sequence, where it cleaves and resolves cruciform DNA. In Streptococcus pneumoniae serotype 4 (strain ATCC BAA-334 / TIGR4), this protein is Holliday junction branch migration complex subunit RuvB.